A 196-amino-acid polypeptide reads, in one-letter code: Beta-crystallin A2 (196 aa).

Positions 1–11 (MTSEAMDTLGQ) are N-terminal arm. Beta/gamma crystallin 'Greek key' domains are found at residues 12–51 (YKIT…KVES) and 52–98 (GPWV…RPVK). Residues 99-104 (CANHND) are connecting peptide. Beta/gamma crystallin 'Greek key' domains lie at 105–146 (SKAI…KVNA) and 147–195 (GAWV…RRIQ).

This sequence belongs to the beta/gamma-crystallin family. As to quaternary structure, homo/heterodimer, or complexes of higher-order. The structure of beta-crystallin oligomers seems to be stabilized through interactions between the N-terminal arms.

Its function is as follows. Crystallins are the dominant structural components of the vertebrate eye lens. This chain is Beta-crystallin A2 (CRYBA2), found in Gallus gallus (Chicken).